An 898-amino-acid polypeptide reads, in one-letter code: Putative aconitate hydratase, cytoplasmic (898 aa).

Substrate contacts are provided by residues Gln-90 and 209 to 211; that span reads DSH. 3 residues coordinate [4Fe-4S] cluster: Cys-441, Cys-507, and Cys-510. Substrate contacts are provided by residues Arg-540, Arg-545, Arg-703, and 784–785; that span reads SR.

The protein belongs to the aconitase/IPM isomerase family. [4Fe-4S] cluster is required as a cofactor.

The protein localises to the cytoplasm. It carries out the reaction citrate = D-threo-isocitrate. Its pathway is carbohydrate metabolism; glyoxylate and dicarboxylate metabolism. Its function is as follows. Catalyzes the isomerization of citrate to isocitrate via cis-aconitate. The chain is Putative aconitate hydratase, cytoplasmic from Oryza sativa subsp. japonica (Rice).